We begin with the raw amino-acid sequence, 474 residues long: Trehalose-6-phosphate synthase (474 aa).

R10 contacts D-glucose 6-phosphate. 22-23 is a UDP-alpha-D-glucose binding site; that stretch reads GG. The D-glucose 6-phosphate site is built by Y77 and D131. UDP-alpha-D-glucose-binding residues include R263 and K268. R301 serves as a coordination point for D-glucose 6-phosphate. Residues F340 and 366 to 370 each bind UDP-alpha-D-glucose; that span reads LVAKE.

It belongs to the glycosyltransferase 20 family. In terms of assembly, homotetramer.

The enzyme catalyses D-glucose 6-phosphate + UDP-alpha-D-glucose = alpha,alpha-trehalose 6-phosphate + UDP + H(+). It functions in the pathway glycan biosynthesis; trehalose biosynthesis. Probably involved in the osmoprotection via the biosynthesis of trehalose. Catalyzes the transfer of glucose from UDP-alpha-D-glucose (UDP-Glc) to D-glucose 6-phosphate (Glc-6-P) to form trehalose-6-phosphate. Acts with retention of the anomeric configuration of the UDP-sugar donor. The polypeptide is Trehalose-6-phosphate synthase (Escherichia coli O1:K1 / APEC).